The sequence spans 737 residues: Dual specificity protein kinase KNS1 (737 aa).

2 disordered regions span residues 1–33 (MSQN…SSNK) and 270–290 (SSLR…NKSN). Residues 15–33 (ANMNNSTTTGPANNTSSNK) show a composition bias toward polar residues. Positions 277-290 (SNGSSESASSNKSN) are enriched in low complexity. The region spanning 313 to 720 (FVVKDLLGQG…AKDALDHEWF (408 aa)) is the Protein kinase domain. Residues 319–327 (LGQGTFGKV) and Lys-343 contribute to the ATP site. Asp-440 serves as the catalytic Proton acceptor. Thr-562 is subject to Phosphothreonine.

The protein belongs to the protein kinase superfamily. CMGC Ser/Thr protein kinase family. Lammer subfamily. Phosphorylated (auto-) on Ser/Thr/Tyr.

It carries out the reaction L-seryl-[protein] + ATP = O-phospho-L-seryl-[protein] + ADP + H(+). The enzyme catalyses L-threonyl-[protein] + ATP = O-phospho-L-threonyl-[protein] + ADP + H(+). It catalyses the reaction L-tyrosyl-[protein] + ATP = O-phospho-L-tyrosyl-[protein] + ADP + H(+). In terms of biological role, nonessential protein kinase. This Saccharomyces cerevisiae (strain ATCC 204508 / S288c) (Baker's yeast) protein is Dual specificity protein kinase KNS1 (KNS1).